The chain runs to 73 residues: Putative membrane protein insertion efficiency factor (73 aa).

This sequence belongs to the UPF0161 family.

It is found in the cell inner membrane. Could be involved in insertion of integral membrane proteins into the membrane. The protein is Putative membrane protein insertion efficiency factor of Neisseria meningitidis serogroup C / serotype 2a (strain ATCC 700532 / DSM 15464 / FAM18).